Here is a 267-residue protein sequence, read N- to C-terminus: Tryptophan synthase alpha chain (267 aa).

Residues glutamate 43 and aspartate 54 each act as proton acceptor in the active site.

The protein belongs to the TrpA family. In terms of assembly, tetramer of two alpha and two beta chains.

The enzyme catalyses (1S,2R)-1-C-(indol-3-yl)glycerol 3-phosphate + L-serine = D-glyceraldehyde 3-phosphate + L-tryptophan + H2O. It participates in amino-acid biosynthesis; L-tryptophan biosynthesis; L-tryptophan from chorismate: step 5/5. Functionally, the alpha subunit is responsible for the aldol cleavage of indoleglycerol phosphate to indole and glyceraldehyde 3-phosphate. The sequence is that of Tryptophan synthase alpha chain from Bacillus subtilis (strain 168).